Reading from the N-terminus, the 498-residue chain is ATP synthase subunit beta, chloroplastic (498 aa).

ATP is bound at residue 172-179 (GGAGVGKT).

The protein belongs to the ATPase alpha/beta chains family. In terms of assembly, F-type ATPases have 2 components, CF(1) - the catalytic core - and CF(0) - the membrane proton channel. CF(1) has five subunits: alpha(3), beta(3), gamma(1), delta(1), epsilon(1). CF(0) has four main subunits: a(1), b(1), b'(1) and c(9-12).

Its subcellular location is the plastid. It localises to the chloroplast thylakoid membrane. The catalysed reaction is ATP + H2O + 4 H(+)(in) = ADP + phosphate + 5 H(+)(out). Produces ATP from ADP in the presence of a proton gradient across the membrane. The catalytic sites are hosted primarily by the beta subunits. The protein is ATP synthase subunit beta, chloroplastic of Carica papaya (Papaya).